Here is a 244-residue protein sequence, read N- to C-terminus: Adenosine 5'-phosphosulfate reductase (244 aa).

[4Fe-4S] cluster-binding residues include Cys-129, Cys-130, Cys-212, and Cys-215. The active-site Nucleophile; cysteine thiosulfonate intermediate is Cys-240.

It belongs to the PAPS reductase family. CysH subfamily. It depends on [4Fe-4S] cluster as a cofactor.

The protein localises to the cytoplasm. The enzyme catalyses [thioredoxin]-disulfide + sulfite + AMP + 2 H(+) = adenosine 5'-phosphosulfate + [thioredoxin]-dithiol. It participates in sulfur metabolism; hydrogen sulfide biosynthesis; sulfite from sulfate. Functionally, catalyzes the formation of sulfite from adenosine 5'-phosphosulfate (APS) using thioredoxin as an electron donor. The polypeptide is Adenosine 5'-phosphosulfate reductase (Neisseria meningitidis serogroup A / serotype 4A (strain DSM 15465 / Z2491)).